The chain runs to 730 residues: Sodium-dependent neutral amino acid transporter B(0)AT2 (730 aa).

Positions 1–24 (MPKNSKVVKRELDDDVTESVKDLL) are disordered. The Extracellular segment spans residues 1–70 (MPKNSKVVKR…RPAWSSKLQY (70 aa)). Phosphoserine occurs at positions 25 and 55. The next 3 helical transmembrane spans lie at 71 to 91 (ILAQ…PYLC), 97 to 117 (GAYL…LFFL), and 149 to 169 (VVCY…LFYF). Residues 170–223 (SQSFQQPLPWDQCPLVKNASHTFVEPECEQSSATTYYWYREALNISSSISESGG) are Cytoplasmic-facing. 2 helical membrane-spanning segments follow: residues 224-244 (LNWK…LAMI) and 253-273 (IIYF…IRAL). Asn-276 carries N-linked (GlcNAc...) asparagine glycosylation. 2 consecutive transmembrane segments (helical) span residues 302 to 322 (AATQ…AFSS) and 335 to 355 (VLVS…VFAV). Topologically, residues 356-458 (LGFKANVINE…AMTHFPASPF (103 aa)) are cytoplasmic. A run of 5 helical transmembrane segments spans residues 459–479 (WSVM…FGTI), 494–514 (KEIL…IFVQ), 530–550 (TLPL…VYGI), 575–595 (YVSP…MGLS), and 619–639 (LVVC…VFIV). The Extracellular segment spans residues 640–730 (RRFNLIDDSS…IMPDMPESDL (91 aa)). 3 positions are modified to phosphoserine: Ser-687, Ser-699, and Ser-701.

The protein belongs to the sodium:neurotransmitter symporter (SNF) (TC 2.A.22) family. SLC6A15 subfamily.

The protein localises to the membrane. It catalyses the reaction L-leucine(in) + Na(+)(in) = L-leucine(out) + Na(+)(out). It carries out the reaction L-isoleucine(in) + Na(+)(in) = L-isoleucine(out) + Na(+)(out). The catalysed reaction is L-methionine(in) + Na(+)(in) = L-methionine(out) + Na(+)(out). The enzyme catalyses L-proline(in) + Na(+)(in) = L-proline(out) + Na(+)(out). It catalyses the reaction L-alanine(in) + Na(+)(in) = L-alanine(out) + Na(+)(out). It carries out the reaction L-asparagine(in) + Na(+)(in) = L-asparagine(out) + Na(+)(out). The catalysed reaction is L-valine(in) + Na(+)(in) = L-valine(out) + Na(+)(out). The enzyme catalyses L-cysteine(in) + Na(+)(in) = L-cysteine(out) + Na(+)(out). It catalyses the reaction L-glutamine(in) + Na(+)(in) = L-glutamine(out) + Na(+)(out). It carries out the reaction L-serine(in) + Na(+)(in) = L-serine(out) + Na(+)(out). The catalysed reaction is L-threonine(in) + Na(+)(in) = L-threonine(out) + Na(+)(out). The enzyme catalyses L-pipecolate(in) + Na(+)(in) = L-pipecolate(out) + Na(+)(out). It catalyses the reaction L-phenylalanine(in) + Na(+)(in) = L-phenylalanine(out) + Na(+)(out). Functions as a sodium-dependent neutral amino acid transporter. Exhibits preference for the branched-chain amino acids, particularly leucine, valine and isoleucine and methionine. Can also transport low-affinity substrates such as alanine, phenylalanine, glutamine and pipecolic acid. Mediates the saturable, pH-sensitive and electrogenic cotransport of proline and sodium ions with a stoichiometry of 1:1. May have a role as transporter for neurotransmitter precursors into neurons. In contrast to other members of the neurotransmitter transporter family, does not appear to be chloride-dependent. The chain is Sodium-dependent neutral amino acid transporter B(0)AT2 (SLC6A15) from Pongo abelii (Sumatran orangutan).